A 380-amino-acid polypeptide reads, in one-letter code: Cytochrome b (380 aa).

The next 4 helical transmembrane spans lie at 34–54, 78–99, 114–134, and 179–199; these read FGSL…LLAA, WLIR…YLHI, WNTG…GYVL, and FFTL…IHLT. Positions 84 and 98 each coordinate heme b. Heme b contacts are provided by His-183 and His-197. His-202 is an a ubiquinone binding site. Transmembrane regions (helical) follow at residues 227-247, 289-309, 321-341, and 348-368; these read LKDI…ALFS, LGGV…PLLH, LSQL…WVGS, and FMII…VLFP.

This sequence belongs to the cytochrome b family. As to quaternary structure, the cytochrome bc1 complex contains 11 subunits: 3 respiratory subunits (MT-CYB, CYC1 and UQCRFS1), 2 core proteins (UQCRC1 and UQCRC2) and 6 low-molecular weight proteins (UQCRH/QCR6, UQCRB/QCR7, UQCRQ/QCR8, UQCR10/QCR9, UQCR11/QCR10 and a cleavage product of UQCRFS1). This cytochrome bc1 complex then forms a dimer. Heme b serves as cofactor.

It is found in the mitochondrion inner membrane. Functionally, component of the ubiquinol-cytochrome c reductase complex (complex III or cytochrome b-c1 complex) that is part of the mitochondrial respiratory chain. The b-c1 complex mediates electron transfer from ubiquinol to cytochrome c. Contributes to the generation of a proton gradient across the mitochondrial membrane that is then used for ATP synthesis. This chain is Cytochrome b (MT-CYB), found in Anthropoides virgo (Demoiselle crane).